Reading from the N-terminus, the 197-residue chain is Imidazoleglycerol-phosphate dehydratase (197 aa).

Belongs to the imidazoleglycerol-phosphate dehydratase family.

Its subcellular location is the cytoplasm. The catalysed reaction is D-erythro-1-(imidazol-4-yl)glycerol 3-phosphate = 3-(imidazol-4-yl)-2-oxopropyl phosphate + H2O. Its pathway is amino-acid biosynthesis; L-histidine biosynthesis; L-histidine from 5-phospho-alpha-D-ribose 1-diphosphate: step 6/9. This chain is Imidazoleglycerol-phosphate dehydratase, found in Rhodopseudomonas palustris (strain HaA2).